The following is a 328-amino-acid chain: Oligopeptide transport ATP-binding protein AppD (328 aa).

The ABC transporter domain maps to 5-256; sequence LEVNNLKTYF…PLHPYTEGLL (252 aa). 41–48 is a binding site for ATP; that stretch reads GESGSGKS.

This sequence belongs to the ABC transporter superfamily.

The protein localises to the cell membrane. Functionally, this protein is a component of an oligopeptide permease, a binding protein-dependent transport system. This APP system can completely substitute for the OPP system in both sporulation and genetic competence, though, unlike OPP, is incapable of transporting tripeptides. Probably responsible for energy coupling to the transport system. The polypeptide is Oligopeptide transport ATP-binding protein AppD (appD) (Bacillus subtilis (strain 168)).